The sequence spans 823 residues: Nuclear factor I family protein (823 aa).

A disordered region spans residues 1–56 (MEPHLKIDVSSASGSTTTGATASTSEAPQDSQAQQTMPPPSSDWSNQFNSPEAVSP). A compositionally biased stretch (low complexity) spans 10 to 25 (SSASGSTTTGATASTS). A compositionally biased stretch (polar residues) spans 26 to 52 (EAPQDSQAQQTMPPPSSDWSNQFNSPE). A DNA-binding region (CTF/NF-I) is located at residues 61–253 (IKCFSPYSQE…DVDTKITLTY (193 aa)). 3 disordered regions span residues 364-408 (PYPI…NDEV), 433-468 (SRTQ…AFRS), and 777-823 (APPA…NEKK). Positions 386-396 (PSEKRSRDISS) are enriched in basic and acidic residues. Polar residues predominate over residues 433–447 (SRTQQNQGAPGTSRQ). The segment covering 777–794 (APPACSPSSSNSSLGAAN) has biased composition (low complexity).

This sequence belongs to the CTF/NF-I family. In terms of tissue distribution, expressed in muscles, neurons and intestinal cells.

The protein localises to the nucleus. Functionally, probable transcription factor which recognizes and binds the palindromic sequence 5'-TTGGCANNNTGCCAA-3' present in promoters. Plays a role in locomotion, pharyngeal pumping, egg-laying, and life span. The polypeptide is Nuclear factor I family protein (Caenorhabditis elegans).